We begin with the raw amino-acid sequence, 993 residues long: Nisin biosynthesis protein NisB (993 aa).

Residues 838–851 (AIFCADSKIIPNLL) form a helical membrane-spanning segment.

It to B.subtilis SpaB and S.epidermidis EpiB.

It localises to the cell membrane. Its function is as follows. Involved in the post-translational modification of the lantibiotic nisin. The polypeptide is Nisin biosynthesis protein NisB (nisB) (Lactococcus lactis subsp. lactis (Streptococcus lactis)).